A 178-amino-acid chain; its full sequence is C-phycoerythrin class 2 subunit beta (178 aa).

Residues Cys-50 and Cys-61 each contribute to the phycourobilin site. (2R,3E)-phycoerythrobilin is bound by residues Cys-82 and Cys-159.

It belongs to the phycobiliprotein family. As to quaternary structure, heterodimer of an alpha and a beta chain. In terms of processing, contains two covalently linked phycoerythrobilin chromophores and one covalently linked phycourobilin chromophore.

Its subcellular location is the cellular thylakoid membrane. Its function is as follows. Light-harvesting photosynthetic bile pigment-protein from the phycobiliprotein complex. The protein is C-phycoerythrin class 2 subunit beta (mpeB) of Synechococcus sp. (strain WH8020).